A 437-amino-acid polypeptide reads, in one-letter code: Trigger factor (437 aa).

The 86-residue stretch at 161 to 246 (DDQVNIDFVG…VNSVSAPVLP (86 aa)) folds into the PPIase FKBP-type domain.

It belongs to the FKBP-type PPIase family. Tig subfamily.

It localises to the cytoplasm. It carries out the reaction [protein]-peptidylproline (omega=180) = [protein]-peptidylproline (omega=0). In terms of biological role, involved in protein export. Acts as a chaperone by maintaining the newly synthesized protein in an open conformation. Functions as a peptidyl-prolyl cis-trans isomerase. This is Trigger factor from Pseudomonas putida (strain GB-1).